A 375-amino-acid polypeptide reads, in one-letter code: Alcohol dehydrogenase 1 (375 aa).

The residue at position 2 (S2) is an N-acetylserine. Zn(2+) is bound by residues C47, H68, C98, C101, C104, C112, and C175. NAD(+)-binding positions include 200–205 (WSGRVG), D224, and K229. K234 carries the post-translational modification N6-succinyllysine. 293 to 295 (VGV) contacts NAD(+). An N6-succinyllysine modification is found at K340. Residue R370 coordinates NAD(+).

The protein belongs to the zinc-containing alcohol dehydrogenase family. Class-I subfamily. In terms of assembly, homodimer. Zn(2+) is required as a cofactor.

It localises to the cytoplasm. It catalyses the reaction a primary alcohol + NAD(+) = an aldehyde + NADH + H(+). The catalysed reaction is a secondary alcohol + NAD(+) = a ketone + NADH + H(+). This Geomys knoxjonesi (Jones' pocket gopher) protein is Alcohol dehydrogenase 1 (ADH1).